The following is a 182-amino-acid chain: Small ribosomal subunit protein uS4c (182 aa).

In terms of domain architecture, S4 RNA-binding spans 82–143 (MRLDNILFRL…KERSKVLIQN (62 aa)).

This sequence belongs to the universal ribosomal protein uS4 family. In terms of assembly, part of the 30S ribosomal subunit. Contacts protein S5. The interaction surface between S4 and S5 is involved in control of translational fidelity.

Its subcellular location is the plastid. The protein localises to the chloroplast. Its function is as follows. One of the primary rRNA binding proteins, it binds directly to 16S rRNA where it nucleates assembly of the body of the 30S subunit. With S5 and S12 plays an important role in translational accuracy. This Tigridia sp. (strain Lejeune 1997) protein is Small ribosomal subunit protein uS4c (rps4).